Reading from the N-terminus, the 201-residue chain is Holliday junction resolvase RecU (201 aa).

Thr87, Asp89, Asp102, and Gln121 together coordinate Mg(2+).

This sequence belongs to the RecU family. Requires Mg(2+) as cofactor.

It is found in the cytoplasm. The catalysed reaction is Endonucleolytic cleavage at a junction such as a reciprocal single-stranded crossover between two homologous DNA duplexes (Holliday junction).. Functionally, endonuclease that resolves Holliday junction intermediates in genetic recombination. Cleaves mobile four-strand junctions by introducing symmetrical nicks in paired strands. Promotes annealing of linear ssDNA with homologous dsDNA. Required for DNA repair, homologous recombination and chromosome segregation. The sequence is that of Holliday junction resolvase RecU from Levilactobacillus brevis (strain ATCC 367 / BCRC 12310 / CIP 105137 / JCM 1170 / LMG 11437 / NCIMB 947 / NCTC 947) (Lactobacillus brevis).